An 894-amino-acid chain; its full sequence is Alanine--tRNA ligase (894 aa).

4 residues coordinate Zn(2+): His569, His573, Cys683, and His687.

This sequence belongs to the class-II aminoacyl-tRNA synthetase family. Zn(2+) serves as cofactor.

It localises to the cytoplasm. The catalysed reaction is tRNA(Ala) + L-alanine + ATP = L-alanyl-tRNA(Ala) + AMP + diphosphate. In terms of biological role, catalyzes the attachment of alanine to tRNA(Ala) in a two-step reaction: alanine is first activated by ATP to form Ala-AMP and then transferred to the acceptor end of tRNA(Ala). Also edits incorrectly charged Ser-tRNA(Ala) and Gly-tRNA(Ala) via its editing domain. This is Alanine--tRNA ligase from Chloroflexus aurantiacus (strain ATCC 29366 / DSM 635 / J-10-fl).